We begin with the raw amino-acid sequence, 253 residues long: 5-oxoprolinase subunit A (253 aa).

The protein belongs to the LamB/PxpA family. As to quaternary structure, forms a complex composed of PxpA, PxpB and PxpC.

It catalyses the reaction 5-oxo-L-proline + ATP + 2 H2O = L-glutamate + ADP + phosphate + H(+). Functionally, catalyzes the cleavage of 5-oxoproline to form L-glutamate coupled to the hydrolysis of ATP to ADP and inorganic phosphate. The polypeptide is 5-oxoprolinase subunit A (Syntrophobacter fumaroxidans (strain DSM 10017 / MPOB)).